Here is a 289-residue protein sequence, read N- to C-terminus: Phosphatidylserine decarboxylase proenzyme (289 aa).

Active-site charge relay system; for autoendoproteolytic cleavage activity residues include D92, H149, and S254. Catalysis depends on S254, which acts as the Schiff-base intermediate with substrate; via pyruvic acid; for decarboxylase activity. The residue at position 254 (S254) is a Pyruvic acid (Ser); by autocatalysis.

Belongs to the phosphatidylserine decarboxylase family. PSD-B subfamily. Prokaryotic type I sub-subfamily. As to quaternary structure, heterodimer of a large membrane-associated beta subunit and a small pyruvoyl-containing alpha subunit. Pyruvate is required as a cofactor. In terms of processing, is synthesized initially as an inactive proenzyme. Formation of the active enzyme involves a self-maturation process in which the active site pyruvoyl group is generated from an internal serine residue via an autocatalytic post-translational modification. Two non-identical subunits are generated from the proenzyme in this reaction, and the pyruvate is formed at the N-terminus of the alpha chain, which is derived from the carboxyl end of the proenzyme. The autoendoproteolytic cleavage occurs by a canonical serine protease mechanism, in which the side chain hydroxyl group of the serine supplies its oxygen atom to form the C-terminus of the beta chain, while the remainder of the serine residue undergoes an oxidative deamination to produce ammonia and the pyruvoyl prosthetic group on the alpha chain. During this reaction, the Ser that is part of the protease active site of the proenzyme becomes the pyruvoyl prosthetic group, which constitutes an essential element of the active site of the mature decarboxylase.

Its subcellular location is the cell membrane. The enzyme catalyses a 1,2-diacyl-sn-glycero-3-phospho-L-serine + H(+) = a 1,2-diacyl-sn-glycero-3-phosphoethanolamine + CO2. It functions in the pathway phospholipid metabolism; phosphatidylethanolamine biosynthesis; phosphatidylethanolamine from CDP-diacylglycerol: step 2/2. Functionally, catalyzes the formation of phosphatidylethanolamine (PtdEtn) from phosphatidylserine (PtdSer). This Pseudomonas aeruginosa (strain UCBPP-PA14) protein is Phosphatidylserine decarboxylase proenzyme.